The following is a 420-amino-acid chain: UDP-N-acetylmuramoylalanine--D-glutamate ligase (420 aa).

109 to 115 (GSAGKTT) is a binding site for ATP.

Belongs to the MurCDEF family.

It is found in the cytoplasm. The catalysed reaction is UDP-N-acetyl-alpha-D-muramoyl-L-alanine + D-glutamate + ATP = UDP-N-acetyl-alpha-D-muramoyl-L-alanyl-D-glutamate + ADP + phosphate + H(+). It functions in the pathway cell wall biogenesis; peptidoglycan biosynthesis. Cell wall formation. Catalyzes the addition of glutamate to the nucleotide precursor UDP-N-acetylmuramoyl-L-alanine (UMA). The protein is UDP-N-acetylmuramoylalanine--D-glutamate ligase of Chlamydia abortus (strain DSM 27085 / S26/3) (Chlamydophila abortus).